A 124-amino-acid chain; its full sequence is Large ribosomal subunit protein bL12 (124 aa).

The protein belongs to the bacterial ribosomal protein bL12 family. Homodimer. Part of the ribosomal stalk of the 50S ribosomal subunit. Forms a multimeric L10(L12)X complex, where L10 forms an elongated spine to which 2 to 4 L12 dimers bind in a sequential fashion. Binds GTP-bound translation factors.

Functionally, forms part of the ribosomal stalk which helps the ribosome interact with GTP-bound translation factors. Is thus essential for accurate translation. The sequence is that of Large ribosomal subunit protein bL12 from Herminiimonas arsenicoxydans.